The chain runs to 679 residues: Stress-70 protein, mitochondrial (679 aa).

The transit peptide at 1–46 directs the protein to the mitochondrion; that stretch reads MISATRAAAARLVGTAASRTPAAARHQDGWNGLSHEAFRFVSRRDY. The tract at residues 1-432 is interaction with NFS1; the sequence is MISATRAAAA…IQGGVLAGDV (432 aa). Residues Thr-63 and Asn-64 each contribute to the ADP site. The tract at residues 63 to 431 is nucleotide-binding domain (NBD); the sequence is TNSCVAVMEG…AIQGGVLAGD (369 aa). Lys-76 carries the N6-acetyllysine modification. At Thr-87 the chain carries Phosphothreonine. An N6-acetyllysine; alternate mark is found at Lys-135 and Lys-138. N6-succinyllysine; alternate occurs at positions 135 and 138. The residue at position 143 (Lys-143) is an N6-acetyllysine. The residue at position 206 (Lys-206) is an N6-acetyllysine; alternate. Position 206 is an N6-succinyllysine; alternate (Lys-206). At Lys-206 the chain carries N6-malonyllysine; alternate. Residues Lys-234 and Lys-288 each carry the N6-acetyllysine modification. An N6-acetyllysine; alternate modification is found at Lys-300. Position 300 is an N6-succinyllysine; alternate (Lys-300). Positions 313, 316, and 320 each coordinate ADP. The residue at position 360 (Lys-360) is an N6-acetyllysine; alternate. Position 360 is an N6-succinyllysine; alternate (Lys-360). Lys-368 is subject to N6-succinyllysine. Gly-388 and Arg-391 together coordinate ADP. N6-succinyllysine is present on Lys-394. Ser-408 carries the post-translational modification Phosphoserine. An interdomain linker region spans residues 432 to 441; that stretch reads VTDVLLLDVT. The tract at residues 432–679 is interaction with FXN and ISCU; sequence VTDVLLLDVT…QKEDQKEEKQ (248 aa). Positions 442 to 679 are substrate-binding domain (SBD); sequence PLSLGIETLG…QKEDQKEEKQ (238 aa). Residue Arg-513 is modified to Omega-N-methylarginine. Residues Lys-567 and Lys-600 each carry the N6-acetyllysine; alternate modification. N6-succinyllysine; alternate is present on residues Lys-567 and Lys-600. Lys-610 is subject to N6-succinyllysine. Lys-612 carries the N6-acetyllysine modification. Residue Lys-646 is modified to N6-acetyllysine; alternate. The residue at position 646 (Lys-646) is an N6-succinyllysine; alternate. The tract at residues 656–679 is disordered; sequence ASEREGSGSSGTGEQKEDQKEEKQ. Basic and acidic residues predominate over residues 669–679; that stretch reads EQKEDQKEEKQ.

The protein belongs to the heat shock protein 70 family. In terms of assembly, interacts strongly with the intermediate form of FXN and weakly with its mature form. Interacts with HSCB. Associates with the mitochondrial contact site and cristae organizing system (MICOS) complex, composed of at least MICOS10/MIC10, CHCHD3/MIC19, CHCHD6/MIC25, APOOL/MIC27, IMMT/MIC60, APOO/MIC23/MIC26 and QIL1/MIC13. This complex was also known under the names MINOS or MitOS complex. The MICOS complex associates with mitochondrial outer membrane proteins SAMM50, MTX1, MTX2 and DNAJC11, mitochondrial inner membrane protein TMEM11 and with HSPA9. Interacts with DNLZ, the interaction is required to prevent self-aggregation. Interacts with TESPA1. Interacts with PDPN. Interacts with NFU1, NFS1 and ISCU. Interacts with TP53; the interaction promotes TP53 degradation. Interacts (via SBD domain) with UBXN2A; the interaction with UBXN2A inhibits HSPA9/MOT-2 interaction with and degradation of TP53, thereby promotes TP53 translocation to the nucleus. Interacts with ITPR1 AND VDAC1; this interaction couples ITPR1 to VDAC1. Component of the TIM23 mitochondrial inner membrane pre-sequence translocase complex.

The protein localises to the mitochondrion. It localises to the nucleus. The protein resides in the nucleolus. Its subcellular location is the cytoplasm. It is found in the mitochondrion matrix. The enzyme catalyses ATP + H2O = ADP + phosphate + H(+). The chaperone activity is regulated by ATP-induced allosteric coupling of the nucleotide-binding (NBD) and substrate-binding (SBD) domains. ATP binding in the NBD leads to a conformational change in the NBD, which is transferred through the interdomain linker (IDL) to the substrate-binding domain (SBD). This elicits a reduced substrate affinity and a faster substrate exchange rate. Upon hydrolysis of ATP to ADP, the protein undergoes a conformational change that increases its affinity for substrate proteins. It cycles through repeated phases of ATP hydrolysis and nucleotide exchange, facilitating repeated cycles of substrate binding and release. Functions in collaboration with co-chaperones. Functions with the co-chaperone, DNLZ, to maintain solubility and regulate ATP hydrolysis. Nucleotide exchange factors, GRPEL1 and GRPEL2, accelerate nucleotide exchange. Its function is as follows. Mitochondrial chaperone that plays a key role in mitochondrial protein import, folding, and assembly. Plays an essential role in the protein quality control system, the correct folding of proteins, the re-folding of misfolded proteins, and the targeting of proteins for subsequent degradation. These processes are achieved through cycles of ATP binding, ATP hydrolysis, and ADP release, mediated by co-chaperones. In mitochondria, it associates with the TIM (translocase of the inner membrane) protein complex to assist in the import and folding of mitochondrial proteins. Plays an important role in mitochondrial iron-sulfur cluster (ISC) biogenesis, interacts with and stabilizes ISC cluster assembly proteins FXN, NFU1, NFS1 and ISCU. Regulates erythropoiesis via stabilization of ISC assembly. Regulates mitochondrial calcium-dependent apoptosis by coupling two calcium channels, ITPR1 and VDAC1, at the mitochondria-associated endoplasmic reticulum (ER) membrane to facilitate calcium transport from the ER lumen to the mitochondria intermembrane space, providing calcium for the downstream calcium channel MCU, which releases it into the mitochondrial matrix. Although primarily located in the mitochondria, it is also found in other cellular compartments. In the cytosol, it associates with proteins involved in signaling, apoptosis, or senescence. It may play a role in cell cycle regulation via its interaction with and promotion of degradation of TP53. May play a role in the control of cell proliferation and cellular aging. Protects against reactive oxygen species (ROS). Extracellular HSPA9 plays a cytoprotective role by preventing cell lysis following immune attack by the membrane attack complex by disrupting formation of the complex. The chain is Stress-70 protein, mitochondrial from Cricetulus griseus (Chinese hamster).